A 214-amino-acid polypeptide reads, in one-letter code: MTVLLPQLNHIHKLPVVLNRRLRQSYRLPVISAVSGKELILSGKVRAVEPKEANAVVASEGYILLDVRPAWEREKARVKGSLHVPLFVEDPDNGPITLLKKWIHLGYIGLWTGQRFTMINDEFALRVVEAVPDKESKVLVVCGEGLRSLAAVSKLHGEGYKSLGWLTGGFNRVSEGDFPEIEGTEELRFATIGGVSFYLLKLLVLLPSFGQKSR.

The 125-residue stretch at 58-182 (ASEGYILLDV…VSEGDFPEIE (125 aa)) folds into the Rhodanese domain. Catalysis depends on C142, which acts as the Cysteine persulfide intermediate. A helical membrane pass occupies residues 190 to 206 (ATIGGVSFYLLKLLVLL).

The protein resides in the membrane. This chain is Rhodanese-like domain-containing protein 10 (STR10), found in Arabidopsis thaliana (Mouse-ear cress).